A 49-amino-acid chain; its full sequence is Beta-toxin Rc1 (49 aa).

Disulfide bonds link C15-C31, C22-C40, and C26-C42.

The protein belongs to the long (4 C-C) scorpion toxin superfamily. Sodium channel inhibitor family. Beta subfamily. In terms of tissue distribution, expressed by the venom gland.

The protein localises to the secreted. In terms of biological role, beta toxins bind voltage-independently at site-4 of sodium channels (Nav) and shift the voltage of activation toward more negative potentials thereby affecting sodium channel activation and promoting spontaneous and repetitive firing. This toxin acts on X.laevis Nav1.6/SCN8A and insect BgNav1 channels, and also displays a small but significant effect on X.laevis Nav1.4/SCN4A channels. In mice induces nociception (licking and lifting behaviors) during the first 15 minutes after injection, and increases the release of TNF-alpha in J774.1 cells. This chain is Beta-toxin Rc1, found in Rhopalurus crassicauda (Scorpion).